The primary structure comprises 293 residues: Formamidopyrimidine-DNA glycosylase (293 aa).

The Schiff-base intermediate with DNA role is filled by Pro-2. Glu-3 acts as the Proton donor in catalysis. Lys-58 (proton donor; for beta-elimination activity) is an active-site residue. The DNA site is built by His-104, Arg-123, and Lys-166. The FPG-type zinc finger occupies 257 to 293 (AVYDREGERCRTPGCNGTVKRLVQNGRSTFWCSGCQT). Arg-283 (proton donor; for delta-elimination activity) is an active-site residue.

It belongs to the FPG family. As to quaternary structure, monomer. Zn(2+) serves as cofactor.

It carries out the reaction Hydrolysis of DNA containing ring-opened 7-methylguanine residues, releasing 2,6-diamino-4-hydroxy-5-(N-methyl)formamidopyrimidine.. It catalyses the reaction 2'-deoxyribonucleotide-(2'-deoxyribose 5'-phosphate)-2'-deoxyribonucleotide-DNA = a 3'-end 2'-deoxyribonucleotide-(2,3-dehydro-2,3-deoxyribose 5'-phosphate)-DNA + a 5'-end 5'-phospho-2'-deoxyribonucleoside-DNA + H(+). Involved in base excision repair of DNA damaged by oxidation or by mutagenic agents. Acts as a DNA glycosylase that recognizes and removes damaged bases. Has a preference for oxidized purines, such as 7,8-dihydro-8-oxoguanine (8-oxoG). Has AP (apurinic/apyrimidinic) lyase activity and introduces nicks in the DNA strand. Cleaves the DNA backbone by beta-delta elimination to generate a single-strand break at the site of the removed base with both 3'- and 5'-phosphates. This Rhodopseudomonas palustris (strain HaA2) protein is Formamidopyrimidine-DNA glycosylase.